The chain runs to 310 residues: Malate dehydrogenase (310 aa).

Residues 7–12 (GAGNVG) and Asp-32 each bind NAD(+). Residues Arg-81 and Arg-87 each contribute to the substrate site. Residues Asn-94 and 117–119 (VSN) each bind NAD(+). Substrate is bound by residues Asn-119 and Arg-150. The active-site Proton acceptor is the His-174.

It belongs to the LDH/MDH superfamily. MDH type 3 family.

The catalysed reaction is (S)-malate + NAD(+) = oxaloacetate + NADH + H(+). Functionally, catalyzes the reversible oxidation of malate to oxaloacetate. The protein is Malate dehydrogenase of Chlorobium luteolum (strain DSM 273 / BCRC 81028 / 2530) (Pelodictyon luteolum).